The following is a 515-amino-acid chain: Maturase K (515 aa).

The protein belongs to the intron maturase 2 family. MatK subfamily.

The protein localises to the plastid. It localises to the chloroplast. Usually encoded in the trnK tRNA gene intron. Probably assists in splicing its own and other chloroplast group II introns. In Trillium pusillum (Dwarf wakerobin), this protein is Maturase K.